Consider the following 243-residue polypeptide: 6-carboxyhexanoate--CoA ligase (243 aa).

It belongs to the BioW family. As to quaternary structure, homodimer. Mg(2+) serves as cofactor.

The catalysed reaction is heptanedioate + ATP + CoA = 6-carboxyhexanoyl-CoA + AMP + diphosphate. Its pathway is metabolic intermediate metabolism; pimeloyl-CoA biosynthesis; pimeloyl-CoA from pimelate: step 1/1. Its function is as follows. Catalyzes the transformation of pimelate into pimeloyl-CoA with concomitant hydrolysis of ATP to AMP. The protein is 6-carboxyhexanoate--CoA ligase of Thermocrinis albus (strain DSM 14484 / JCM 11386 / HI 11/12).